The sequence spans 359 residues: Ribosomal RNA large subunit methyltransferase M (359 aa).

S-adenosyl-L-methionine contacts are provided by residues S186, 219–222, D238, D258, and D275; that span reads CPGG. Residue K304 is the Proton acceptor of the active site.

It belongs to the class I-like SAM-binding methyltransferase superfamily. RNA methyltransferase RlmE family. RlmM subfamily. Monomer.

It localises to the cytoplasm. It carries out the reaction cytidine(2498) in 23S rRNA + S-adenosyl-L-methionine = 2'-O-methylcytidine(2498) in 23S rRNA + S-adenosyl-L-homocysteine + H(+). Catalyzes the 2'-O-methylation at nucleotide C2498 in 23S rRNA. The chain is Ribosomal RNA large subunit methyltransferase M from Aliivibrio fischeri (strain MJ11) (Vibrio fischeri).